Here is a 430-residue protein sequence, read N- to C-terminus: Histidine--tRNA ligase, chloroplastic (430 aa).

It belongs to the class-II aminoacyl-tRNA synthetase family.

Its subcellular location is the plastid. The protein resides in the chloroplast. The enzyme catalyses tRNA(His) + L-histidine + ATP = L-histidyl-tRNA(His) + AMP + diphosphate + H(+). The sequence is that of Histidine--tRNA ligase, chloroplastic from Pyropia yezoensis (Susabi-nori).